Here is a 906-residue protein sequence, read N- to C-terminus: Protein transport protein SEC24-2 (906 aa).

4 residues coordinate Zn(2+): Cys-222, Cys-225, Cys-244, and Cys-247. The tract at residues 222–247 is zinc finger-like; that stretch reads CRRCRSYMNPFVTFIEQGRRWRCNFC.

Belongs to the SEC23/SEC24 family. SEC24 subfamily. As to quaternary structure, the COPII coat is composed of at least 5 proteins: the SEC23/24 complex, the SEC13/31 complex, and the protein SAR1. Golgi apparatus membrane; Peripheral membrane protein; Cytoplasmic side.

It is found in the cytoplasm. Its subcellular location is the cytoplasmic vesicle. The protein localises to the COPII-coated vesicle membrane. It localises to the endoplasmic reticulum membrane. The protein resides in the golgi apparatus membrane. Its function is as follows. Component of the coat protein complex II (COPII) which promotes the formation of transport vesicles from the endoplasmic reticulum (ER). The coat has two main functions, the physical deformation of the endoplasmic reticulum membrane into vesicles and the selection of cargo molecules. The chain is Protein transport protein SEC24-2 (SEC242) from Candida glabrata (strain ATCC 2001 / BCRC 20586 / JCM 3761 / NBRC 0622 / NRRL Y-65 / CBS 138) (Yeast).